Here is a 741-residue protein sequence, read N- to C-terminus: Eukaryotic peptide chain release factor GTP-binding subunit (741 aa).

The segment at 5 to 135 (QQQQQQFNAN…SYNNNNNYNN (131 aa)) is several sort of repeats. Positions 59–161 (QQFGQYGQQQ…DQQQETGSGQ (103 aa)) are enriched in low complexity. Disordered stretches follow at residues 59–186 (QQFG…KKVL) and 199–264 (IVTK…KTEA). The charged stretch occupies residues 162–311 (MSLEDYQKQQ…EQIDASIVND (150 aa)). Composition is skewed to basic and acidic residues over residues 166-175 (DYQKQQKESL) and 202-241 (KKKE…ESKV). A tr-type G domain is found at 316 to 541 (KDHMSIIFMG…YLDSMPLAVR (226 aa)). The tract at residues 325 to 332 (GHVDAGKS) is G1. 325-332 (GHVDAGKS) lines the GTP pocket. A G2 region spans residues 381–385 (GKTIE). T399 is subject to Phosphothreonine. The tract at residues 402–405 (DAPG) is G3. Residues 402–406 (DAPGH) and 464–467 (NKMD) contribute to the GTP site. The tract at residues 464-467 (NKMD) is G4. The tract at residues 505–507 (SGY) is G5.

It belongs to the TRAFAC class translation factor GTPase superfamily. Classic translation factor GTPase family. ERF3 subfamily.

It is found in the cytoplasm. In terms of biological role, involved in translation termination. Stimulates the activity of ERF1. Binds guanine nucleotides. In Ogataea pini (Yeast), this protein is Eukaryotic peptide chain release factor GTP-binding subunit (SUP2).